A 434-amino-acid chain; its full sequence is Histidinol dehydrogenase (434 aa).

Residues Tyr-129, Gln-191, and Asn-214 each contribute to the NAD(+) site. Substrate-binding residues include Ser-240, Gln-262, and His-265. Zn(2+)-binding residues include Gln-262 and His-265. Catalysis depends on proton acceptor residues Glu-329 and His-330. The substrate site is built by His-330, Asp-363, Glu-417, and His-422. Residue Asp-363 participates in Zn(2+) binding. His-422 lines the Zn(2+) pocket.

The protein belongs to the histidinol dehydrogenase family. It depends on Zn(2+) as a cofactor.

The catalysed reaction is L-histidinol + 2 NAD(+) + H2O = L-histidine + 2 NADH + 3 H(+). It participates in amino-acid biosynthesis; L-histidine biosynthesis; L-histidine from 5-phospho-alpha-D-ribose 1-diphosphate: step 9/9. Its function is as follows. Catalyzes the sequential NAD-dependent oxidations of L-histidinol to L-histidinaldehyde and then to L-histidine. This chain is Histidinol dehydrogenase, found in Colwellia psychrerythraea (strain 34H / ATCC BAA-681) (Vibrio psychroerythus).